The primary structure comprises 629 residues: Probable potassium transport system protein Kup 3 (629 aa).

12 helical membrane passes run 20–40, 54–74, 106–126, 143–163, 171–191, 212–232, 253–273, 291–311, 343–363, 372–392, 400–420, and 425–445; these read LSLS…LYTF, VTTI…IASV, PFII…GTIT, PSLK…LFAI, IGKA…ILGA, FLFS…LCAT, WFGL…ALVL, FLLP…QAII, IYIG…IIGF, AYGI…FIAL, IITS…FFAA, and FING…MMYI.

It belongs to the HAK/KUP transporter (TC 2.A.72) family.

The protein localises to the cell inner membrane. The enzyme catalyses K(+)(in) + H(+)(in) = K(+)(out) + H(+)(out). Functionally, transport of potassium into the cell. Likely operates as a K(+):H(+) symporter. The polypeptide is Probable potassium transport system protein Kup 3 (Legionella pneumophila (strain Paris)).